The primary structure comprises 121 residues: Large ribosomal subunit protein bL12 (121 aa).

It belongs to the bacterial ribosomal protein bL12 family. As to quaternary structure, homodimer. Part of the ribosomal stalk of the 50S ribosomal subunit. Forms a multimeric L10(L12)X complex, where L10 forms an elongated spine to which 2 to 4 L12 dimers bind in a sequential fashion. Binds GTP-bound translation factors.

Forms part of the ribosomal stalk which helps the ribosome interact with GTP-bound translation factors. Is thus essential for accurate translation. This Bacillus pumilus (strain SAFR-032) protein is Large ribosomal subunit protein bL12.